Here is a 727-residue protein sequence, read N- to C-terminus: Sodium-dependent neutral amino acid transporter SLC6A17 (727 aa).

At 1–68 (MPKNSKVTQR…DRPAWNSKLQ (68 aa)) the chain is on the cytoplasmic side. Phosphoserine occurs at positions 13 and 20. Residues 69–89 (YILAQIGFSVGLGNIWRFPYL) traverse the membrane as a helical segment. Topologically, residues 90 to 96 (CQKNGGG) are extracellular. A helical transmembrane segment spans residues 97-116 (AYLVPYLVLLIIIGIPLFFL). Residues 117–140 (ELAVGQRIRRGSIGVWHYVCPRLG) lie on the Cytoplasmic side of the membrane. A helical transmembrane segment spans residues 141-161 (GIGFSSCIVCLFVGLYYNVII). The Extracellular portion of the chain corresponds to 162 to 224 (GWSVFYFFKS…NSISESGGLN (63 aa)). N186 carries an N-linked (GlcNAc...) asparagine glycan. A helical transmembrane segment spans residues 225 to 243 (WKMTLCLLVAWSIVGMAVV). The Cytoplasmic segment spans residues 244 to 251 (KGIQSSGK). The helical transmembrane segment at 252-269 (VMYFSSLFPYVVLACFLV) threads the bilayer. Topologically, residues 270–304 (RGLLLRGAVDGILHMFTPKLDKMLDPQVWREAATQ) are extracellular. Residues 305–322 (VFFALGLGFGGVIAFSSY) traverse the membrane as a helical segment. Topologically, residues 323–333 (NKQDNNCHFDA) are cytoplasmic. Residues 334-355 (ALVSFINFFTSVLATLVVFAVL) form a helical membrane-spanning segment. The Extracellular segment spans residues 356 to 451 (GFKANIMNEK…FIAFTEAMTH (96 aa)). Y377 is subject to Phosphotyrosine. N-linked (GlcNAc...) asparagine glycosylation is present at N393. Residues 452–471 (FPASPFWSVMFFLMLINLGL) traverse the membrane as a helical segment. At 472 to 494 (GSMIGTMAGITTPIIDTFKVPKE) the chain is on the cytoplasmic side. The helical transmembrane segment at 495-513 (MFTVGCCVFAFFVGLLFVQ) threads the bilayer. Residues 514–528 (RSGNYFVTMFDDYSA) are Extracellular-facing. The chain crosses the membrane as a helical span at residues 529-549 (TLPLTVIVILENIAVAWIYGT). Topologically, residues 550–569 (KKFMQELTEMLGFQPYRFYF) are cytoplasmic. The helical transmembrane segment at 570-591 (YMWKFVSPLCMAVLTTASIIQL) threads the bilayer. Over 592-618 (GVSPPGYSAWIKEEAAERYLYFPNWAM) the chain is Extracellular. A helical membrane pass occupies residues 619–641 (ALLITLIAVATLPIPVVFILRHF). Residues 642–727 (HLLSDGSNTL…LLASTPESEL (86 aa)) lie on the Cytoplasmic side of the membrane. Phosphoserine is present on residues S665 and S701. The disordered stretch occupies residues 680-727 (VPSEAPSPMPTHRSYLGPGSTSPLDNSNNPNGRYGSGYLLASTPESEL). The segment covering 698-710 (GSTSPLDNSNNPN) has biased composition (polar residues).

Belongs to the sodium:neurotransmitter symporter (SNF) (TC 2.A.22) family. Expressed in the brain. The strongest expression levels in embryonic, postnatal, and adult stages are found in both cortical and hippocampal tissues.

The protein resides in the cytoplasmic vesicle. The protein localises to the secretory vesicle. It is found in the synaptic vesicle membrane. It localises to the postsynapse. Its subcellular location is the presynapse. The catalysed reaction is L-proline(in) + Na(+)(in) = L-proline(out) + Na(+)(out). The enzyme catalyses L-leucine(in) + Na(+)(in) = L-leucine(out) + Na(+)(out). It carries out the reaction glycine(in) + Na(+)(in) = glycine(out) + Na(+)(out). It catalyses the reaction L-alanine(in) + Na(+)(in) = L-alanine(out) + Na(+)(out). The catalysed reaction is L-glutamine(in) + Na(+)(in) = L-glutamine(out) + Na(+)(out). In terms of biological role, synaptic vesicle transporter with apparent selectivity for neutral amino acids. The transport is sodium-coupled but chloride-independent, likely driven by the proton electrochemical gradient generated by vacuolar H(+)-ATPase in an overall electrogenic mechanism. May contribute to the synaptic uptake of neurotransmitter precursors in a process coupled in part to vesicle exocytosis. The sequence is that of Sodium-dependent neutral amino acid transporter SLC6A17 from Mus musculus (Mouse).